A 120-amino-acid polypeptide reads, in one-letter code: Basic phospholipase A2 homolog LmutTX (120 aa).

7 disulfide bridges follow: Cys26–Cys114, Cys28–Cys44, Cys43–Cys95, Cys49–Cys120, Cys50–Cys88, Cys57–Cys81, and Cys75–Cys86.

Belongs to the phospholipase A2 family. Group II subfamily. K49 sub-subfamily. As to quaternary structure, monomer. As to expression, expressed by the venom gland.

It is found in the secreted. Functionally, snake venom phospholipase A2 homolog that lacks enzymatic activity. Shows moderate cytotoxicity against C2C12 myotubes (activity above 200 ug/mL). Also shows antibacterial activity against both Gram-positive and Gram-negative bacteria. A model of myotoxic mechanism has been proposed: an apo Lys49-PLA2 is activated by the entrance of a hydrophobic molecule (e.g. fatty acid) at the hydrophobic channel of the protein leading to a reorientation of a monomer. This reorientation causes a transition between 'inactive' to 'active' states, causing alignment of C-terminal and membrane-docking sites (MDoS) side-by-side and putting the membrane-disruption sites (MDiS) in the same plane, exposed to solvent and in a symmetric position for both monomers. The MDoS region stabilizes the toxin on membrane by the interaction of charged residues with phospholipid head groups. Subsequently, the MDiS region destabilizes the membrane with penetration of hydrophobic residues. This insertion causes a disorganization of the membrane, allowing an uncontrolled influx of ions (i.e. calcium and sodium), and eventually triggering irreversible intracellular alterations and cell death. The chain is Basic phospholipase A2 homolog LmutTX from Lachesis muta muta (Bushmaster).